Consider the following 594-residue polypeptide: Arginine--tRNA ligase (594 aa).

The short motif at 133 to 143 (ANPTGPMNIVS) is the 'HIGH' region element.

It belongs to the class-I aminoacyl-tRNA synthetase family. Monomer.

The protein resides in the cytoplasm. It carries out the reaction tRNA(Arg) + L-arginine + ATP = L-arginyl-tRNA(Arg) + AMP + diphosphate. This Leptospira biflexa serovar Patoc (strain Patoc 1 / Ames) protein is Arginine--tRNA ligase.